A 215-amino-acid polypeptide reads, in one-letter code: Cytochrome b6 (215 aa).

A helical transmembrane segment spans residues Ile32–Phe52. Cys35 lines the heme c pocket. Heme b is bound by residues His86 and His100. Helical transmembrane passes span Ala90–Phe110, Ser116–Tyr136, and Leu186–Ile206. 2 residues coordinate heme b: His187 and His202.

This sequence belongs to the cytochrome b family. PetB subfamily. In terms of assembly, the 4 large subunits of the cytochrome b6-f complex are cytochrome b6, subunit IV (17 kDa polypeptide, PetD), cytochrome f and the Rieske protein, while the 4 small subunits are PetG, PetL, PetM and PetN. The complex functions as a dimer. Heme b serves as cofactor. It depends on heme c as a cofactor.

The protein resides in the plastid. It is found in the chloroplast thylakoid membrane. Component of the cytochrome b6-f complex, which mediates electron transfer between photosystem II (PSII) and photosystem I (PSI), cyclic electron flow around PSI, and state transitions. The protein is Cytochrome b6 of Tetradesmus obliquus (Green alga).